The primary structure comprises 189 residues: High affinity copper uptake protein 1 (189 aa).

At 1–67 the chain is on the extracellular side; that stretch reads MDHSAHMGMS…AGLVINTAGE (67 aa). The Methionine segments (Mets) motif signature appears at 13–18; it reads MGMSDM. The interval 15-36 is disordered; that stretch reads MSDMNHSTTMPPSHHHPTSSGS. A compositionally biased stretch (low complexity) spans 20–36; sequence HSTTMPPSHHHPTSSGS. Residues 68 to 88 form a helical membrane-spanning segment; that stretch reads MAGAFVAVFLLAMFYEGLKIA. Over 89-131 the chain is Cytoplasmic; that stretch reads REGLLRKSQVSIRYNSMPVPGPNGTILMETHKTVGQQMLSFPH. The residue at position 113 (threonine 113) is a Phosphothreonine. Residues 132-152 traverse the membrane as a helical segment; that stretch reads LLQTVLHIIQVVISYFLMLIF. Residues 153–155 are Extracellular-facing; that stretch reads MTY. Residues 156–176 traverse the membrane as a helical segment; it reads NGYLCIAVAAGAGTGYFLFSW. The Cytoplasmic portion of the chain corresponds to 177 to 189; that stretch reads KKAVVVDITEHCH. The residue at position 188 (cysteine 188) is a Cysteine sulfenic acid (-SOH).

It belongs to the copper transporter (Ctr) (TC 1.A.56) family. SLC31A subfamily. Homotrimer; is stabilized by cisplatin via interactions between cisplatin and the methionine-rich clusters, and could be crucial for the copper(2+) reduction process and copper(1+) stabilization. Heterotrimer between SLC31A1, CCS and SOD1; this heterotrimer is copper(1+)-mediated and its maintenance is regulated through SOD1 activation. Interacts with KDR; this interaction is induced upon VEGFA stimulation leading to SLC31A1 and KDR subsequent co-internalization to early endosomes, thereby activating KDR downstream signaling in endothelial cells. Interacts (via C-terminal domain) with ATOX1 (via dimer form); this interaction improves ATOX1 stability and controls intracellular copper(1+) levels. Interacts with SLC31A2; this interaction stabilizes SLC31A2 and protects its from ubiquitination and degradation. Interacts (via C-terminal domain) with CCS; this interaction is copper(1+)-mediated. In terms of processing, proteolytic cleavage, leading to a truncated form, is facilitated by SLC31A2 and initiated preferentially by CTSL and to a minor extend by CTSB in endolysosomal compartments. A post-CTSL/cathepsin L processing occurs to yield to the fully truncated form. Sulfenylated at Cys-188 after stimulation with VEGFA, which induces SLC31A1-KDR disulfide bond formation and their co-internalization to early endosomes, driving to a sustained VEGFR2 signaling.

The protein localises to the cell membrane. The protein resides in the early endosome membrane. It is found in the recycling endosome membrane. Its subcellular location is the apical cell membrane. It localises to the late endosome membrane. The protein localises to the basolateral cell membrane. The enzyme catalyses Ag(+)(out) = Ag(+)(in). The catalysed reaction is Cu(+)(out) = Cu(+)(in). Uniporter that mediates the transport of copper(1+) from the extracellular space to the cytoplasm, across the plasma membrane and delivers directly copper(1+) to specific chaperone such as ATOX1, via a copper(1+)- mediated transient interaction between the C-terminal domain and a copper(1+) chaperone, thus controlling intracellular copper(1+) levels. May function in copper(1+) import from the apical membrane thus may drive intestinal copper absorption. The copper(1+) transport mechanism is sodium-independent, saturable and of high-affinity. Also mediates the uptake of silver(1+). May function in the influx of the platinum-containing chemotherapeutic agents. The platinum-containing chemotherapeutic agents uptake is saturable. In vitro, mediates the transport of cadmium(2+) into cells. Also participates in the first step of copper(2+) acquisition by cells through a direct transfer of copper(2+) from copper(2+) carriers in blood, such as ALB to the N-terminal domain of SLC31A1, leading to copper(2+) reduction and probably followed by copper(1+) stabilization. In addition, functions as a redox sensor to promote angiogenesis in endothelial cells, in a copper(1+) transport independent manner, by transmitting the VEGF-induced ROS signal through a sulfenylation at Cys-189 leadin g to a subsequent disulfide bond formation between SLC31A1 and KDR. The SLC31A1-KDR complex is then co-internalized to early endosomes, driving a sustained VEGFR2 signaling. Its function is as follows. Mobilizes copper(1+) out of the endosomal compartment, making copper(1+) available for export out of the cells. The polypeptide is High affinity copper uptake protein 1 (Sus scrofa (Pig)).